A 61-amino-acid chain; its full sequence is MAVQKSKPSRAKRGKRRSHDHVIQHALSIDKLSKEIHIRHHITKKGYYKGKKTLLFHLLSK.

The interval 1-20 (MAVQKSKPSRAKRGKRRSHD) is disordered. Basic residues predominate over residues 7-19 (KPSRAKRGKRRSH).

This sequence belongs to the bacterial ribosomal protein bL32 family.

The polypeptide is Large ribosomal subunit protein bL32 (Buchnera aphidicola subsp. Cinara cedri (strain Cc)).